We begin with the raw amino-acid sequence, 406 residues long: Cysteine desulfurase (406 aa).

K226 bears the N6-(pyridoxal phosphate)lysine mark. C364 serves as the catalytic Cysteine persulfide intermediate.

It belongs to the class-V pyridoxal-phosphate-dependent aminotransferase family. Csd subfamily. Homodimer. Interacts with SufE and the SufBCD complex composed of SufB, SufC and SufD. The interaction with SufE is required to mediate the direct transfer of the sulfur atom from the S-sulfanylcysteine. Pyridoxal 5'-phosphate serves as cofactor.

The protein localises to the cytoplasm. It carries out the reaction (sulfur carrier)-H + L-cysteine = (sulfur carrier)-SH + L-alanine. The catalysed reaction is L-selenocysteine + AH2 = hydrogenselenide + L-alanine + A + H(+). It participates in cofactor biosynthesis; iron-sulfur cluster biosynthesis. Functionally, cysteine desulfurases mobilize the sulfur from L-cysteine to yield L-alanine, an essential step in sulfur metabolism for biosynthesis of a variety of sulfur-containing biomolecules. Component of the suf operon, which is activated and required under specific conditions such as oxidative stress and iron limitation. Acts as a potent selenocysteine lyase in vitro, that mobilizes selenium from L-selenocysteine. Selenocysteine lyase activity is however unsure in vivo. The protein is Cysteine desulfurase of Serratia proteamaculans (strain 568).